A 420-amino-acid chain; its full sequence is UDP-N-acetylglucosamine 1-carboxyvinyltransferase (420 aa).

22-23 (KN) lines the phosphoenolpyruvate pocket. Residue Arg-92 participates in UDP-N-acetyl-alpha-D-glucosamine binding. The active-site Proton donor is the Cys-116. 2-(S-cysteinyl)pyruvic acid O-phosphothioketal is present on Cys-116. Residues 121–125 (RPVDQ), Asp-304, and Ile-326 each bind UDP-N-acetyl-alpha-D-glucosamine.

Belongs to the EPSP synthase family. MurA subfamily.

It is found in the cytoplasm. The catalysed reaction is phosphoenolpyruvate + UDP-N-acetyl-alpha-D-glucosamine = UDP-N-acetyl-3-O-(1-carboxyvinyl)-alpha-D-glucosamine + phosphate. The protein operates within cell wall biogenesis; peptidoglycan biosynthesis. Cell wall formation. Adds enolpyruvyl to UDP-N-acetylglucosamine. This chain is UDP-N-acetylglucosamine 1-carboxyvinyltransferase, found in Paraburkholderia phymatum (strain DSM 17167 / CIP 108236 / LMG 21445 / STM815) (Burkholderia phymatum).